The following is a 308-amino-acid chain: 4-hydroxy-3-methylbut-2-enyl diphosphate reductase (308 aa).

Residue C13 coordinates [4Fe-4S] cluster. 2 residues coordinate (2E)-4-hydroxy-3-methylbut-2-enyl diphosphate: H42 and H75. 2 residues coordinate dimethylallyl diphosphate: H42 and H75. Positions 42 and 75 each coordinate isopentenyl diphosphate. C97 is a binding site for [4Fe-4S] cluster. (2E)-4-hydroxy-3-methylbut-2-enyl diphosphate is bound at residue H125. H125 contributes to the dimethylallyl diphosphate binding site. Residue H125 coordinates isopentenyl diphosphate. Catalysis depends on E127, which acts as the Proton donor. T165 provides a ligand contact to (2E)-4-hydroxy-3-methylbut-2-enyl diphosphate. C195 is a binding site for [4Fe-4S] cluster. Positions 223, 224, 225, and 267 each coordinate (2E)-4-hydroxy-3-methylbut-2-enyl diphosphate. Positions 223, 224, 225, and 267 each coordinate dimethylallyl diphosphate. 4 residues coordinate isopentenyl diphosphate: S223, S224, N225, and S267.

Belongs to the IspH family. [4Fe-4S] cluster serves as cofactor.

The enzyme catalyses isopentenyl diphosphate + 2 oxidized [2Fe-2S]-[ferredoxin] + H2O = (2E)-4-hydroxy-3-methylbut-2-enyl diphosphate + 2 reduced [2Fe-2S]-[ferredoxin] + 2 H(+). It catalyses the reaction dimethylallyl diphosphate + 2 oxidized [2Fe-2S]-[ferredoxin] + H2O = (2E)-4-hydroxy-3-methylbut-2-enyl diphosphate + 2 reduced [2Fe-2S]-[ferredoxin] + 2 H(+). It participates in isoprenoid biosynthesis; dimethylallyl diphosphate biosynthesis; dimethylallyl diphosphate from (2E)-4-hydroxy-3-methylbutenyl diphosphate: step 1/1. The protein operates within isoprenoid biosynthesis; isopentenyl diphosphate biosynthesis via DXP pathway; isopentenyl diphosphate from 1-deoxy-D-xylulose 5-phosphate: step 6/6. Functionally, catalyzes the conversion of 1-hydroxy-2-methyl-2-(E)-butenyl 4-diphosphate (HMBPP) into a mixture of isopentenyl diphosphate (IPP) and dimethylallyl diphosphate (DMAPP). Acts in the terminal step of the DOXP/MEP pathway for isoprenoid precursor biosynthesis. This is 4-hydroxy-3-methylbut-2-enyl diphosphate reductase from Chlamydia muridarum (strain MoPn / Nigg).